A 321-amino-acid polypeptide reads, in one-letter code: Nucleus-vacuole junction protein 1 (321 aa).

Residues 1-22 (MTRPPLVRGIFSLGLSVAVLKG) form the signal peptide. Residues 73 to 125 (ELSWRKVFNFISRQSSELDARIYVLILLLSFLLPIAWTVLDGDRETTLEDKDN) form a TSC13-binding region. The chain crosses the membrane as a helical span at residues 94 to 114 (IYVLILLLSFLLPIAWTVLDG). The OSH1-binding stretch occupies residues 139 to 195 (KHYNDGERAVLQFGKNRSEPIILSYKDMNVLEGEHEFTSKEEHSNSHLTSKSENALS). The residue at position 156 (Ser156) is a Phosphoserine. Residues 174-183 (EFTSKEEHSN) are compositionally biased toward basic and acidic residues. The segment at 174-194 (EFTSKEEHSNSHLTSKSENAL) is disordered. Residues 184-194 (SHLTSKSENAL) show a composition bias toward polar residues. At Ser199 the chain carries Phosphoserine. The interval 210-275 (QLEEDKNEPN…SLKSSTSFPI (66 aa)) is disordered. Residues 233–321 (DCSSSSEVES…EQAYSQPFRY (89 aa)) are VAC8-binding. The segment covering 242–262 (SQSKCRKESTAEPDSLSRDTR) has biased composition (basic and acidic residues). Residues 263 to 272 (TTSSLKSSTS) are compositionally biased toward low complexity. Ser285 and Ser298 each carry phosphoserine. The tract at residues 299–321 (PTKSSNLDAQVNTEQAYSQPFRY) is disordered.

In terms of assembly, interacts with OSH1, TSC13 and VAC8.

Its subcellular location is the nucleus outer membrane. Functionally, involved in the formation of nucleus-vacuole (NV) junctions during piecemeal microautophagy of the nucleus (PMN). NV junctions are interorganelle interfaces mediated by NVJ1 in the nuclear envelope and VAC8 on the vacuole membrane. Together, NVJ1 and VAC8 form Velcro-like patches through which teardrop-like portions of the nucleus are pinched off into the vacuolar lumen and degraded by the PMN process. Also acts as an outer-nuclear membrane receptor for OSH1 and TSC13. The protein is Nucleus-vacuole junction protein 1 (NVJ1) of Saccharomyces cerevisiae (strain YJM789) (Baker's yeast).